Here is a 129-residue protein sequence, read N- to C-terminus: Glycine cleavage system H protein 2 (129 aa).

One can recognise a Lipoyl-binding domain in the interval serine 24–lysine 105. At lysine 65 the chain carries N6-lipoyllysine.

This sequence belongs to the GcvH family. In terms of assembly, the glycine cleavage system is composed of four proteins: P, T, L and H. Requires (R)-lipoate as cofactor.

The glycine cleavage system catalyzes the degradation of glycine. The H protein shuttles the methylamine group of glycine from the P protein to the T protein. The polypeptide is Glycine cleavage system H protein 2 (Pseudomonas aeruginosa (strain ATCC 15692 / DSM 22644 / CIP 104116 / JCM 14847 / LMG 12228 / 1C / PRS 101 / PAO1)).